Reading from the N-terminus, the 179-residue chain is Viral interleukin-10 homolog (179 aa).

The signal sequence occupies residues 1 to 18; the sequence is MFRASLLCCLVLLAGVWA. 2 disulfides stabilise this stretch: cysteine 30/cysteine 127 and cysteine 80/cysteine 133. 2 N-linked (GlcNAc...) asparagine; by host glycosylation sites follow: asparagine 100 and asparagine 135.

This sequence belongs to the IL-10 family.

It localises to the secreted. In terms of biological role, down-regulates the expression of the TAP1 gene (transporter associated with antigen processing), thereby affecting the transport of peptides into the endoplasmic reticulum and subsequent peptide loading by MHC class I molecules. In consequence, infected cells are masked for immune recognition by cytotoxic T-lymphocytes. This chain is Viral interleukin-10 homolog, found in Equus caballus (Horse).